The following is an 86-amino-acid chain: RNA-binding protein Hfq (86 aa).

Residues 9–68 (DPFLNALRRERIPVSIYLVNGIKLQGQIESFDQFVILLKNTVNQMVYKHAISTVVPARPV) enclose the Sm domain. A disordered region spans residues 65 to 86 (ARPVSHHSGERGSDRPSEKSED). Residues 71–86 (HSGERGSDRPSEKSED) show a composition bias toward basic and acidic residues.

Belongs to the Hfq family. As to quaternary structure, homohexamer.

In terms of biological role, RNA chaperone that binds small regulatory RNA (sRNAs) and mRNAs to facilitate mRNA translational regulation in response to envelope stress, environmental stress and changes in metabolite concentrations. Also binds with high specificity to tRNAs. This Vibrio vulnificus (strain YJ016) protein is RNA-binding protein Hfq.